The following is a 445-amino-acid chain: Cytochrome P450 monooxygenase penB (445 aa).

Cysteine 381 contributes to the heme binding site.

This sequence belongs to the cytochrome P450 family. The cofactor is heme.

The protein operates within secondary metabolite biosynthesis. Its pathway is alkaloid biosynthesis. It participates in mycotoxin biosynthesis. Cytochrome P450 monooxygenase; part of the gene cluster that mediates the biosynthesis of penigequinolones, potent insecticidal alkaloids that contain a highly modified 10-carbon prenyl group. The first stage is catalyzed by the nonribosomal peptide synthetase penN that condenses anthranilic acid and O-methyl-L-tyrosine to produce 4'-methoxycyclopeptin. 4'-methoxycyclopeptin is then converted to 4'-methoxydehydrocyclopeptin by the ketoglutarate-dependent dioxygenase penM through dehydrogenation to form a double bond between C-alpha and C-beta of the O-methyltyrosine side chain. PenM also converts its first product methoxydehydrocyclopeptin to 4'-methoxycyclopenin. The following conversion of 4'methoxycyclopenin into 4'-methoxyviridicatin is catalyzed by the cyclopenase penL. 4'-methoxyviridicatin is the precursor of quinolone natural products, and is further converted to quinolinone B. The prenyltransferase penI then catalyzes the canonical Friedel-Crafts alkylation of quinolinone B with dimethylallyl cation to yield dimethylallyl quinolone, which is subjected to FAD-dependent dehydrogenation by the FAD-linked oxidoreductase penH to yield conjugated aryl diene. The delta(3') double bond then serves as the site of the second alkylation with DMAPP catalyzed by the prenyltransferase penG to yield a carbenium ion intermediate, which can be attacked by H(2)O to yield a styrenyl quinolone containing a C3'-hydroxyprenyl chain, or undergo cyclization to yield yaequinolones J1 and J2. The conversion of the styrenyl quinolone into the tetrahydrofuran-containing yaequinolone C is performed by the FAD-dependent monooxygenase penE and involves epoxidation of the terminal C7'-C8' olefin, followed by epoxide ring opening initiated by the C3' hydroxyl group. The predicted cysteine hydrolase penJ acts as an epoxide hydrolase that enhances the rate of the 5-exo-tet cyclization step, increasing the yield of yaequinolone C. PenF catalyzes the cationic rearrangement of the epoxide formed by penE (before ring opening to produce yaequinolone C) into yaequinolone D. Finally, the short-chain dehydrogenase/reductase (SDR)-like reductase penD, catalyzes both the dehydration of yaequinolone D and the reduction of the resulting oxonium to yield penigequinolone. This Penicillium thymicola protein is Cytochrome P450 monooxygenase penB.